Reading from the N-terminus, the 143-residue chain is Large ribosomal subunit protein uL16 (143 aa).

This sequence belongs to the universal ribosomal protein uL16 family. In terms of assembly, part of the 50S ribosomal subunit.

Its function is as follows. Binds 23S rRNA and is also seen to make contacts with the A and possibly P site tRNAs. The protein is Large ribosomal subunit protein uL16 of Thermosynechococcus vestitus (strain NIES-2133 / IAM M-273 / BP-1).